Consider the following 313-residue polypeptide: 2,3-dihydroxyphenylpropionate/2,3-dihydroxicinnamic acid 1,2-dioxygenase (313 aa).

Histidine 116 functions as the Proton donor in the catalytic mechanism. The Proton acceptor role is filled by histidine 180.

This sequence belongs to the LigB/MhpB extradiol dioxygenase family. In terms of assembly, homotetramer. The cofactor is Fe(2+).

The enzyme catalyses 3-(2,3-dihydroxyphenyl)propanoate + O2 = (2Z,4E)-2-hydroxy-6-oxonona-2,4-dienedioate + H(+). It catalyses the reaction (2E)-3-(2,3-dihydroxyphenyl)prop-2-enoate + O2 = (2Z,4E,7E)-2-hydroxy-6-oxonona-2,4,7-trienedioate + H(+). It participates in aromatic compound metabolism; 3-phenylpropanoate degradation. Functionally, catalyzes the non-heme iron(II)-dependent oxidative cleavage of 2,3-dihydroxyphenylpropionic acid and 2,3-dihydroxicinnamic acid into 2-hydroxy-6-ketononadienedioate and 2-hydroxy-6-ketononatrienedioate, respectively. In Mycobacterium sp. (strain MCS), this protein is 2,3-dihydroxyphenylpropionate/2,3-dihydroxicinnamic acid 1,2-dioxygenase.